A 1497-amino-acid chain; its full sequence is Polyunsaturated fatty acid synthase subunit C (1497 aa).

2 dehydratase (DH) domain regions span residues 271–422 (YKLC…DYGK) and 797–937 (QGQY…RVRI). Low complexity predominate over residues 944–958 (ASSSASSVGSSASAE). Positions 944 to 977 (ASSSASSVGSSASAEVAERTRSKAAPQPVASGPA) are disordered. Residues 1026 to 1470 (LGDLGDRSFM…ILRGACYLRR (445 aa)) form an enoylreductase (ER) domain region.

This sequence belongs to the thioester dehydratase family. FabA subfamily. In terms of assembly, component of the polyunsaturated fatty acid synthase complex composed of at least ORF-A, ORF-B and ORF-C.

The protein operates within lipid metabolism; fatty acid biosynthesis. Polyketide synthase-like protein; part of the polyunsaturated fatty acid synthase composed of the 3 PKS-like subunits A, B and C. While the saturated fatty acids (SFAs) in Thraustochytrium are produced by the conventional fatty acid synthase (FAS) pathway, polyunsaturated fatty acids (PUFAs) including docosahexeanoic acid (DHA) and docosapentaenoic acid (DPA) are synthesized via an anaerobical PKS pathway. PUFA synthase assimilates fatty acyl-CoA, the product of FAS, as the starter unit to synthesize DPA, and this starter unit may be butyryl-CoA, hexanoyl-CoA, or octanoyl-CoA. DPA and DHA biosynthesis seem to differ by the reduction at the N-3 position by PUFA synthase, not the extension of carbon chain. In DHA biosynthesis, PUFA synthase extends the fatty acyl chain from the methyl toward the carboxyl end, and the double bond is formed when the carbon chain is growing, instead of afterward. Therefore, PUFA synthase is unable to transform DPA to DHA, suggesting that DPA is not the precursor of DHA. Moreover, DPA molecule is partly extended by FAS KS domain, so DPA biosynthesis is less dependent on PUFA synthase KS domain than DHA. In Thraustochytrium sp. (strain ATCC 26185 / S-3), this protein is Polyunsaturated fatty acid synthase subunit C.